Consider the following 72-residue polypeptide: Sperm protein associated with the nucleus on the X chromosome N1 (72 aa).

The interval M1–L40 is disordered. The segment covering G10 to V35 has biased composition (basic and acidic residues).

It belongs to the SPAN-X family.

This chain is Sperm protein associated with the nucleus on the X chromosome N1 (SPANXN1), found in Gorilla gorilla gorilla (Western lowland gorilla).